Consider the following 339-residue polypeptide: MKVESVTKEETKKPERKIKLAIAKPEDYSNKNVILEKEEELICPVCGSKNIIKDYERAEIVCEMCGCVLQQNLFDVGPEWRAFDHEQRVKRSRVGAPMTYTIHDKGLSTVIDWRNKDSYGKDISADKRAQLYRLRKWQRRIRVSDASERNLAFALSELDRIASKLGLPRNVRENAAVLYRGAVEKGLIRGRSIEGVAAAALYAACRRCKVPRTLDEIAEVSRVDRKEIGRTYRFISRELNIRLAPTNPVDYVPRFASELKLPGEVESKAISILQKAGEKGLTSGRGPTGVAAAAIYIASVLQGTRRTQREVADVAGVTEVTIRNRYKELTEHLDIDVTL.

The TFIIB-type zinc-finger motif lies at 39-70 (EELICPVCGSKNIIKDYERAEIVCEMCGCVLQ). Zn(2+) is bound by residues Cys-43, Cys-46, Cys-62, and Cys-65. 2 tandem repeats follow at residues 156–239 (SELD…SREL) and 250–331 (DYVP…ELTE).

The protein belongs to the TFIIB family.

In terms of biological role, stabilizes TBP binding to an archaeal box-A promoter. Also responsible for recruiting RNA polymerase II to the pre-initiation complex (DNA-TBP-TFIIB). This Methanococcus maripaludis (strain C7 / ATCC BAA-1331) protein is Transcription initiation factor IIB.